A 476-amino-acid polypeptide reads, in one-letter code: Glutamate--tRNA ligase (476 aa).

Positions 9–19 (PSPTGTLHIGT) match the 'HIGH' region motif. The short motif at 248-252 (KLSKR) is the 'KMSKS' region element. Lys251 contacts ATP.

Belongs to the class-I aminoacyl-tRNA synthetase family. Glutamate--tRNA ligase type 1 subfamily. Monomer.

The protein resides in the cytoplasm. It catalyses the reaction tRNA(Glu) + L-glutamate + ATP = L-glutamyl-tRNA(Glu) + AMP + diphosphate. Catalyzes the attachment of glutamate to tRNA(Glu) in a two-step reaction: glutamate is first activated by ATP to form Glu-AMP and then transferred to the acceptor end of tRNA(Glu). This chain is Glutamate--tRNA ligase, found in Synechococcus sp. (strain CC9311).